We begin with the raw amino-acid sequence, 958 residues long: DNA repair and recombination protein RDH54 (958 aa).

The disordered stretch occupies residues 189–217; that stretch reads EALSQNMGNPSPPTTSTTETVPSTKNDGG. The span at 202–212 shows a compositional bias: low complexity; that stretch reads TTSTTETVPST. The Helicase ATP-binding domain occupies 333 to 521; it reads LENDSDISGC…FTIIDFINPG (189 aa). Residue 380–387 coordinates ATP; sequence IPLTGLCK. The DEGH box motif lies at 506–509; sequence NDLN. A Glycyl lysine isopeptide (Lys-Gly) (interchain with G-Cter in ubiquitin) cross-link involves residue K649. Residues 665-824 form the Helicase C-terminal domain; it reads KLKVLMTLLE…DSEMRNKESS (160 aa).

The protein belongs to the SNF2/RAD54 helicase family. Interacts with RAD51 and DMC1.

The protein localises to the nucleus. The catalysed reaction is ATP + H2O = ADP + phosphate + H(+). Its function is as follows. Involved in the recombinational repair of double-strand breaks (DSB) in DNA during mitosis and meiosis. Has DNA dependent ATPase activity. Promotes D-loop (displacement loop) formation with RAD51 recombinase. Modifies the topology of double-stranded DNA during the D-loop reaction to facilitate the invasion of the homologous duplex molecule by the initiating single-stranded DNA substrate. Required for adaptation from G2/M checkpoint arrest induced by a double strand break, by participating in monitoring the extent of single-stranded DNA produced by resection of DNA ends. This role is distinct from its roles in recombination. Promotes colocalization of RAD51 and DMC1 during meiotic recombination. Involved in crossover interference. This is DNA repair and recombination protein RDH54 (RDH54) from Saccharomyces cerevisiae (strain ATCC 204508 / S288c) (Baker's yeast).